The chain runs to 49 residues: Large ribosomal subunit protein bL33 (49 aa).

It belongs to the bacterial ribosomal protein bL33 family.

The sequence is that of Large ribosomal subunit protein bL33 from Nitratidesulfovibrio vulgaris (strain ATCC 29579 / DSM 644 / CCUG 34227 / NCIMB 8303 / VKM B-1760 / Hildenborough) (Desulfovibrio vulgaris).